The following is a 224-amino-acid chain: uncharacterized protein (224 aa).

Positions 108 to 137 form a coiled coil; the sequence is QLALDRAELNESIRATNENLALQYSKLQTE.

This is an uncharacterized protein from Human picobirnavirus (strain Human/Thailand/Hy005102/-) (PBV).